The following is a 169-amino-acid chain: Myosin regulatory light chain 2, skeletal muscle isoform A (169 aa).

Phosphoserine is present on S21. EF-hand domains follow at residues 26–61 (SQIQ…MGQL), 96–131 (DPED…QCDR), and 132–167 (FTAE…GEEK). 4 residues coordinate Ca(2+): D39, N41, D43, and D50.

In terms of assembly, myosin is a hexamer of 2 heavy chains and 4 light chains. Interacts with nanos3; the interaction negatively regulates mylpfa phosphorylation.

Myosin regulatory subunit that plays a role to maintain muscle integrity during early development. Plays a role in muscle contraction. This Danio rerio (Zebrafish) protein is Myosin regulatory light chain 2, skeletal muscle isoform A (mylpfa).